We begin with the raw amino-acid sequence, 208 residues long: Uracil phosphoribosyltransferase (208 aa).

5-phospho-alpha-D-ribose 1-diphosphate-binding positions include Arg-78, Arg-103, and 130–138 (DPMLATGGS). Uracil contacts are provided by residues Ile-193 and 198-200 (GDA). Asp-199 lines the 5-phospho-alpha-D-ribose 1-diphosphate pocket.

The protein belongs to the UPRTase family. Requires Mg(2+) as cofactor.

The catalysed reaction is UMP + diphosphate = 5-phospho-alpha-D-ribose 1-diphosphate + uracil. It functions in the pathway pyrimidine metabolism; UMP biosynthesis via salvage pathway; UMP from uracil: step 1/1. Allosterically activated by GTP. Functionally, catalyzes the conversion of uracil and 5-phospho-alpha-D-ribose 1-diphosphate (PRPP) to UMP and diphosphate. This Neisseria meningitidis serogroup C (strain 053442) protein is Uracil phosphoribosyltransferase.